A 423-amino-acid polypeptide reads, in one-letter code: Imidazolonepropionase (423 aa).

Residues His87 and His89 each contribute to the Fe(3+) site. Zn(2+) is bound by residues His87 and His89. 4-imidazolone-5-propanoate is bound by residues Arg96, Tyr159, and His192. Position 159 (Tyr159) interacts with N-formimidoyl-L-glutamate. Position 257 (His257) interacts with Fe(3+). His257 provides a ligand contact to Zn(2+). Residue Glu260 participates in 4-imidazolone-5-propanoate binding. Asp331 contacts Fe(3+). Asp331 is a binding site for Zn(2+). Residues Asn333 and Gly335 each contribute to the N-formimidoyl-L-glutamate site. Ser336 contributes to the 4-imidazolone-5-propanoate binding site.

The protein belongs to the metallo-dependent hydrolases superfamily. HutI family. Zn(2+) is required as a cofactor. Requires Fe(3+) as cofactor.

It is found in the cytoplasm. The catalysed reaction is 4-imidazolone-5-propanoate + H2O = N-formimidoyl-L-glutamate. It participates in amino-acid degradation; L-histidine degradation into L-glutamate; N-formimidoyl-L-glutamate from L-histidine: step 3/3. Functionally, catalyzes the hydrolytic cleavage of the carbon-nitrogen bond in imidazolone-5-propanoate to yield N-formimidoyl-L-glutamate. It is the third step in the universal histidine degradation pathway. The sequence is that of Imidazolonepropionase from Porphyromonas gingivalis (strain ATCC 33277 / DSM 20709 / CIP 103683 / JCM 12257 / NCTC 11834 / 2561).